The chain runs to 792 residues: Ubiquitin carboxyl-terminal hydrolase 10 (792 aa).

Residues 2 to 27 are DHR2-binding module; it reads TTQESIKPLVDRILSNPLQFNAAMIS. Disordered regions lie at residues 64 to 87 and 103 to 320; these read AESK…NTVP and KDAA…SITP. The segment covering 107-129 has biased composition (low complexity); sequence DATGAKKSAELSTELSTEPPSSS. The tract at residues 109 to 145 is SIR4-binding module; that stretch reads TGAKKSAELSTELSTEPPSSSSEDDKVGKEEEEEGEI. Residues 144–171 show a composition bias toward basic and acidic residues; the sequence is EIFHEARDYVEPRKASLKERDNADKGDG. The UTP22-binding module stretch occupies residues 167–208; it reads DKGDGEDIGEDIGEDIGEDIGEDIGEDIGENLGSPLATIDDS. A compositionally biased stretch (acidic residues) spans 172-195; the sequence is EDIGEDIGEDIGEDIGEDIGEDIG. Residues 211 to 220 are compositionally biased toward basic and acidic residues; the sequence is ENEKEKRKEL. Acidic residues predominate over residues 226–241; the sequence is SDDEIEDDEDEDDMDY. A compositionally biased stretch (polar residues) spans 288–297; that stretch reads VNNTKENGNR. The 372-residue stretch at 362–733 folds into the USP domain; it reads RGLLNHGVTC…NAYYLLYTRL (372 aa). Cys-371 acts as the Nucleophile in catalysis. Residues 526-563 form a disordered region; sequence LDPNSDLSSDSINGTSATTSTTTSNAATKPSLSSSSSV. The span at 530-539 shows a compositional bias: polar residues; that stretch reads SDLSSDSING. A compositionally biased stretch (low complexity) spans 540–563; that stretch reads TSATTSTTTSNAATKPSLSSSSSV. Catalysis depends on His-691, which acts as the Proton acceptor. A compositionally biased stretch (polar residues) spans 749–766; the sequence is TGNVTSKSKQEQAVNEPN. The disordered stretch occupies residues 749–792; the sequence is TGNVTSKSKQEQAVNEPNNRPLKINSKKNNRKKWKKNKKRKFTK. Positions 773–792 are enriched in basic residues; it reads NSKKNNRKKWKKNKKRKFTK.

This sequence belongs to the peptidase C19 family. Interacts with SIR4. Interacts with the proliferating-cell nuclear antigen PCNA/POL30. Interacts with DHR2 and UTP22.

It localises to the nucleus. Its subcellular location is the chromosome. It is found in the telomere. The protein localises to the nucleolus. It catalyses the reaction Thiol-dependent hydrolysis of ester, thioester, amide, peptide and isopeptide bonds formed by the C-terminal Gly of ubiquitin (a 76-residue protein attached to proteins as an intracellular targeting signal).. Its function is as follows. Deubiquitinating enzyme involved in telomere and HM loci silencing, which is the repression of chromatin structure which leads to a stop in the transcription of nearby genes. Targets histone H2B for deubiquitination, thus helping to localize SIR2 to the telomere. At silent chromatin, including telomeres and the rDNA locus, not only maintains low H2B 'Lys-123' ubiquitination (H2BK123Ub), but also low H3 'Lys-4' and 'Lys-79' methylation (H3K4me and H3K79me, respectively). Controls the proliferating-cell nuclear antigen PCNA/POL30 deubiquitination which is crucial for keeping TLS polymerases in check as well as for down-regulating the error-free bypass. Deubiquitinates and stabilizes RPA190, the largest subunit of RNA polymerase I, to achieve optimal levels of ribosomes and cell growth. Also protects nutrient transporters such as GAP1 from ubiquitin-dependent endocytosis. This Saccharomyces cerevisiae (strain ATCC 204508 / S288c) (Baker's yeast) protein is Ubiquitin carboxyl-terminal hydrolase 10 (UBP10).